A 258-amino-acid polypeptide reads, in one-letter code: Isoprenyl transferase (258 aa).

The active site involves aspartate 24. Aspartate 24 lines the Mg(2+) pocket. Substrate contacts are provided by residues 25-28 (GNGR), tryptophan 29, arginine 37, histidine 41, and 69-71 (SSE). Asparagine 72 acts as the Proton acceptor in catalysis. Substrate-binding positions include tryptophan 73, arginine 75, arginine 190, and 196–198 (RIS). Residue glutamate 209 coordinates Mg(2+).

This sequence belongs to the UPP synthase family. Homodimer. It depends on Mg(2+) as a cofactor.

Its function is as follows. Catalyzes the condensation of isopentenyl diphosphate (IPP) with allylic pyrophosphates generating different type of terpenoids. The protein is Isoprenyl transferase of Ralstonia nicotianae (strain ATCC BAA-1114 / GMI1000) (Ralstonia solanacearum).